Here is a 118-residue protein sequence, read N- to C-terminus: Crustacean hyperglycemic hormones 2 (118 aa).

A signal peptide spans 1 to 22; that stretch reads MTAFRLVAVALVVVVACSTTWA. Intrachain disulfides connect Cys51–Cys87, Cys67–Cys83, and Cys70–Cys96. Position 116 is a valine amide (Val116).

This sequence belongs to the arthropod CHH/MIH/GIH/VIH hormone family.

It is found in the secreted. Hormone found in the sinus gland of isopods and decapods which controls the blood sugar level. Has a secretagogue action over the amylase released from the midgut gland. May act as a stress hormone and may be involved in the control of molting and reproduction. This Penaeus monodon (Giant tiger prawn) protein is Crustacean hyperglycemic hormones 2 (CHH2).